Here is a 204-residue protein sequence, read N- to C-terminus: dTTP/UTP pyrophosphatase (204 aa).

Asp-68 serves as the catalytic Proton acceptor.

The protein belongs to the Maf family. YhdE subfamily. A divalent metal cation is required as a cofactor.

It localises to the cytoplasm. It catalyses the reaction dTTP + H2O = dTMP + diphosphate + H(+). The catalysed reaction is UTP + H2O = UMP + diphosphate + H(+). Nucleoside triphosphate pyrophosphatase that hydrolyzes dTTP and UTP. May have a dual role in cell division arrest and in preventing the incorporation of modified nucleotides into cellular nucleic acids. The chain is dTTP/UTP pyrophosphatase from Thermotoga petrophila (strain ATCC BAA-488 / DSM 13995 / JCM 10881 / RKU-1).